Consider the following 462-residue polypeptide: Cathepsin F (462 aa).

Residues 1 to 19 (MAPLLQLLWLLTLLSTVAL) form the signal peptide. Positions 20 to 248 (SPVPAKPWAD…MSPAKSINDL (229 aa)) are cleaved as a propeptide — activation peptide. 3 N-linked (GlcNAc...) asparagine glycosylation sites follow: Asn35, Asn138, and Asn173. 2 disulfides stabilise this stretch: Cys270–Cys311 and Cys304–Cys344. Residue Cys273 is part of the active site. 2 N-linked (GlcNAc...) asparagine glycosylation sites follow: Asn345 and Asn356. Residues Cys402 and Cys450 are joined by a disulfide bond. Residue His409 is part of the active site. Residue Asn418 is glycosylated (N-linked (GlcNAc...) asparagine). Asn429 is a catalytic residue.

It belongs to the peptidase C1 family.

The protein resides in the lysosome. It catalyses the reaction The recombinant enzyme cleaves synthetic substrates with Phe and Leu (better than Val) in P2, with high specificity constant (kcat/Km) comparable to that of cathepsin L.. Functionally, thiol protease which is believed to participate in intracellular degradation and turnover of proteins. Has also been implicated in tumor invasion and metastasis. The protein is Cathepsin F (Ctsf) of Mus musculus (Mouse).